Reading from the N-terminus, the 189-residue chain is Thymidine kinase (189 aa).

ATP-binding positions include G9–T16 and D85–Q88. Catalysis depends on E86, which acts as the Proton acceptor. Residues C143, C146, C180, and H183 each coordinate Zn(2+).

This sequence belongs to the thymidine kinase family. Homotetramer.

It is found in the cytoplasm. The enzyme catalyses thymidine + ATP = dTMP + ADP + H(+). The chain is Thymidine kinase from Streptococcus pyogenes serotype M3 (strain ATCC BAA-595 / MGAS315).